A 422-amino-acid polypeptide reads, in one-letter code: UDP-N-acetylmuramoylalanine--D-glutamate ligase (422 aa).

102 to 108 (GTNGKTT) is an ATP binding site.

This sequence belongs to the MurCDEF family.

The protein resides in the cytoplasm. The enzyme catalyses UDP-N-acetyl-alpha-D-muramoyl-L-alanine + D-glutamate + ATP = UDP-N-acetyl-alpha-D-muramoyl-L-alanyl-D-glutamate + ADP + phosphate + H(+). It participates in cell wall biogenesis; peptidoglycan biosynthesis. In terms of biological role, cell wall formation. Catalyzes the addition of glutamate to the nucleotide precursor UDP-N-acetylmuramoyl-L-alanine (UMA). The chain is UDP-N-acetylmuramoylalanine--D-glutamate ligase from Helicobacter pylori (strain J99 / ATCC 700824) (Campylobacter pylori J99).